We begin with the raw amino-acid sequence, 260 residues long: Acyl-coenzyme A diphosphatase FITM2 (260 aa).

Topologically, residues 1 to 23 are cytoplasmic; the sequence is MERLENCAQMFQRRFLNESFRRH. The chain crosses the membrane as a helical span at residues 24 to 44; it reads CPVLLACIVLGGSLLKELCPL. The Lumenal segment spans residues 45 to 57; sequence PDSYWNNKRNVLN. Residues 58-78 form a helical membrane-spanning segment; that stretch reads VYFVKFSWGWTLWLLLPFIAL. Topologically, residues 79–93 are cytoplasmic; it reads TNYKLTRSTTKVLRR. Residues 94–114 form a helical membrane-spanning segment; it reads LSSLLVSTLIWYLCTNLFLYI. The Lumenal portion of the chain corresponds to 115-145; sequence ENITGSCYESEAMSDPKEHQDRRECRLHSGY. Residues 146-166 form a helical membrane-spanning segment; it reads WHGFDISGHCFLLSYCILLIL. The active site involves His-154. At 167 to 189 the chain is on the cytoplasmic side; that stretch reads EETSIISNIRFERHWHRMAINAQ. 2 consecutive transmembrane segments (helical) span residues 190-210 and 211-231; these read FAAL…TAVY and FHNI…WYIT. His-212 is an active-site residue. The Cytoplasmic segment spans residues 232-260; the sequence is YRWWYLQPISPGLPPASASRSGKEPIYRN.

This sequence belongs to the FIT family. FIT2 subfamily.

The protein localises to the endoplasmic reticulum membrane. It carries out the reaction an acyl-CoA + H2O = an acyl-4'-phosphopantetheine + adenosine 3',5'-bisphosphate + 2 H(+). In terms of biological role, fatty acyl-coenzyme A (CoA) diphosphatase that hydrolyzes fatty acyl-CoA to yield acyl-4'-phosphopantetheine and adenosine 3',5'-bisphosphate. Preferentially hydrolyzes unsaturated long-chain acyl-CoA substrates in the endoplasmic reticulum (ER) lumen. This catalytic activity is required for maintaining ER structure and for lipid droplets (LDs) biogenesis, which are lipid storage organelles involved in maintaining lipid and energy homeostasis. May directly bind to diacylglycerol (DAGs) and triacylglycerol, which is also important for LD biogenesis. May support directional budding of nacent LDs from the ER into the cytosol by reducing DAG levels at sites of LD formation. May play a role in the regulation of cell morphology, ER morphology and cytoskeletal organization. The chain is Acyl-coenzyme A diphosphatase FITM2 from Xenopus tropicalis (Western clawed frog).